The following is a 381-amino-acid chain: Homoserine O-succinyltransferase (381 aa).

In terms of domain architecture, AB hydrolase-1 spans 45–360 (NAVLVCHALN…PHGHDAFLLD (316 aa)). Ser151 functions as the Nucleophile in the catalytic mechanism. Arg221 is a binding site for substrate. Catalysis depends on residues Asp321 and His354. Asp355 contacts substrate.

It belongs to the AB hydrolase superfamily. MetX family. Homodimer.

Its subcellular location is the cytoplasm. The catalysed reaction is L-homoserine + succinyl-CoA = O-succinyl-L-homoserine + CoA. Its pathway is amino-acid biosynthesis; L-methionine biosynthesis via de novo pathway; O-succinyl-L-homoserine from L-homoserine: step 1/1. Functionally, transfers a succinyl group from succinyl-CoA to L-homoserine, forming succinyl-L-homoserine. The chain is Homoserine O-succinyltransferase from Burkholderia cenocepacia (strain ATCC BAA-245 / DSM 16553 / LMG 16656 / NCTC 13227 / J2315 / CF5610) (Burkholderia cepacia (strain J2315)).